We begin with the raw amino-acid sequence, 95 residues long: UPF0473 protein CD630_12860 (95 aa).

It belongs to the UPF0473 family.

This is UPF0473 protein CD630_12860 from Clostridioides difficile (strain 630) (Peptoclostridium difficile).